The following is a 362-amino-acid chain: 3-dehydroquinate synthase (362 aa).

NAD(+) contacts are provided by residues 71–76 (DGEQYK), 105–109 (GVVGD), 129–130 (TT), Lys-142, Lys-151, and 169–172 (CLNT). Residues Glu-184, His-247, and His-264 each coordinate Zn(2+).

The protein belongs to the sugar phosphate cyclases superfamily. Dehydroquinate synthase family. Co(2+) serves as cofactor. Zn(2+) is required as a cofactor. It depends on NAD(+) as a cofactor.

Its subcellular location is the cytoplasm. It carries out the reaction 7-phospho-2-dehydro-3-deoxy-D-arabino-heptonate = 3-dehydroquinate + phosphate. It functions in the pathway metabolic intermediate biosynthesis; chorismate biosynthesis; chorismate from D-erythrose 4-phosphate and phosphoenolpyruvate: step 2/7. Functionally, catalyzes the conversion of 3-deoxy-D-arabino-heptulosonate 7-phosphate (DAHP) to dehydroquinate (DHQ). This is 3-dehydroquinate synthase from Enterobacter sp. (strain 638).